A 123-amino-acid polypeptide reads, in one-letter code: Holo-[acyl-carrier-protein] synthase (123 aa).

The Mg(2+) site is built by D8 and E60.

Belongs to the P-Pant transferase superfamily. AcpS family. Mg(2+) serves as cofactor.

Its subcellular location is the cytoplasm. The enzyme catalyses apo-[ACP] + CoA = holo-[ACP] + adenosine 3',5'-bisphosphate + H(+). In terms of biological role, transfers the 4'-phosphopantetheine moiety from coenzyme A to a Ser of acyl-carrier-protein. This chain is Holo-[acyl-carrier-protein] synthase, found in Ehrlichia ruminantium (strain Welgevonden).